The sequence spans 319 residues: HTH-type transcriptional regulator YidZ (319 aa).

Residues 8–65 form the HTH lysR-type domain; sequence LDLNLLLCLQLLMQERSVTKAAKRMNVTPSAVSKSLAKLRAWFDDPLFVNTPLGLAPT. A DNA-binding region (H-T-H motif) is located at residues 25-44; it reads VTKAAKRMNVTPSAVSKSLA.

Belongs to the LysR transcriptional regulatory family.

In terms of biological role, involved in anaerobic NO protection. In Salmonella heidelberg (strain SL476), this protein is HTH-type transcriptional regulator YidZ.